We begin with the raw amino-acid sequence, 218 residues long: Small ribosomal subunit protein uS3c (218 aa).

In terms of domain architecture, KH type-2 spans 47 to 118 (VQKNIRISSG…KLNIAITRIT (72 aa)).

This sequence belongs to the universal ribosomal protein uS3 family. In terms of assembly, part of the 30S ribosomal subunit.

It is found in the plastid. The protein localises to the chloroplast. This is Small ribosomal subunit protein uS3c (rps3) from Vitis vinifera (Grape).